The primary structure comprises 365 residues: DNA replication and repair protein RecF (365 aa).

30–37 (GDNGEGKT) is a binding site for ATP.

This sequence belongs to the RecF family.

Its subcellular location is the cytoplasm. In terms of biological role, the RecF protein is involved in DNA metabolism; it is required for DNA replication and normal SOS inducibility. RecF binds preferentially to single-stranded, linear DNA. It also seems to bind ATP. The sequence is that of DNA replication and repair protein RecF from Leptospira borgpetersenii serovar Hardjo-bovis (strain JB197).